The primary structure comprises 277 residues: Proteasome assembly chaperone 1 (277 aa).

This sequence belongs to the PSMG1 family. In terms of assembly, forms a heterodimer with psmg2. Degraded by the proteasome upon completion of 20S proteasome maturation.

The protein resides in the cytoplasm. It localises to the endoplasmic reticulum. In terms of biological role, chaperone protein which promotes assembly of the 20S proteasome as part of a heterodimer with psmg2. This Danio rerio (Zebrafish) protein is Proteasome assembly chaperone 1.